A 154-amino-acid polypeptide reads, in one-letter code: SsrA-binding protein (154 aa).

The protein belongs to the SmpB family.

The protein localises to the cytoplasm. Its function is as follows. Required for rescue of stalled ribosomes mediated by trans-translation. Binds to transfer-messenger RNA (tmRNA), required for stable association of tmRNA with ribosomes. tmRNA and SmpB together mimic tRNA shape, replacing the anticodon stem-loop with SmpB. tmRNA is encoded by the ssrA gene; the 2 termini fold to resemble tRNA(Ala) and it encodes a 'tag peptide', a short internal open reading frame. During trans-translation Ala-aminoacylated tmRNA acts like a tRNA, entering the A-site of stalled ribosomes, displacing the stalled mRNA. The ribosome then switches to translate the ORF on the tmRNA; the nascent peptide is terminated with the 'tag peptide' encoded by the tmRNA and targeted for degradation. The ribosome is freed to recommence translation, which seems to be the essential function of trans-translation. The chain is SsrA-binding protein from Streptococcus thermophilus (strain CNRZ 1066).